A 186-amino-acid chain; its full sequence is Potassium-transporting ATPase KdpC subunit (186 aa).

Residues 10–30 (LTIITMVLCGFLFPLAITLIG) form a helical membrane-spanning segment.

The protein belongs to the KdpC family. As to quaternary structure, the system is composed of three essential subunits: KdpA, KdpB and KdpC.

Its subcellular location is the cell membrane. Its function is as follows. Part of the high-affinity ATP-driven potassium transport (or Kdp) system, which catalyzes the hydrolysis of ATP coupled with the electrogenic transport of potassium into the cytoplasm. This subunit acts as a catalytic chaperone that increases the ATP-binding affinity of the ATP-hydrolyzing subunit KdpB by the formation of a transient KdpB/KdpC/ATP ternary complex. This chain is Potassium-transporting ATPase KdpC subunit, found in Staphylococcus aureus (strain COL).